The sequence spans 252 residues: Chitooligosaccharide deacetylase (252 aa).

Mg(2+) is bound by residues histidine 61 and histidine 125.

It belongs to the YdjC deacetylase family. ChbG subfamily. In terms of assembly, homodimer. The cofactor is Mg(2+).

The protein resides in the cytoplasm. It carries out the reaction N,N'-diacetylchitobiose + H2O = N-acetyl-beta-D-glucosaminyl-(1-&gt;4)-D-glucosamine + acetate. It catalyses the reaction diacetylchitobiose-6'-phosphate + H2O = N'-monoacetylchitobiose-6'-phosphate + acetate. It participates in glycan degradation; chitin degradation. Its function is as follows. Involved in the degradation of chitin. ChbG is essential for growth on the acetylated chitooligosaccharides chitobiose and chitotriose but is dispensable for growth on cellobiose and chitosan dimer, the deacetylated form of chitobiose. Deacetylation of chitobiose-6-P and chitotriose-6-P is necessary for both the activation of the chb promoter by the regulatory protein ChbR and the hydrolysis of phosphorylated beta-glucosides by the phospho-beta-glucosidase ChbF. Catalyzes the removal of only one acetyl group from chitobiose-6-P to yield monoacetylchitobiose-6-P, the inducer of ChbR and the substrate of ChbF. The polypeptide is Chitooligosaccharide deacetylase (Salmonella enteritidis PT4 (strain P125109)).